The sequence spans 46 residues: Iota-conotoxin-like r11b (46 aa).

Residues Pro2 and Pro11 each carry the 4-hydroxyproline modification. Disulfide bonds link Cys5/Cys19, Cys12/Cys22, Cys18/Cys27, and Cys21/Cys38. Pro29 carries the post-translational modification 4-hydroxyproline. Phe44 is modified (D-phenylalanine).

Post-translationally, the natural D-Phe form of the peptide is more potent than the synthetic L-Phe form. Expressed by the venom duct.

The protein resides in the secreted. Functionally, iota-conotoxins bind to voltage-gated sodium channels (Nav) and act as agonists by shifting the voltage-dependence of activation to more hyperpolarized levels. Produces excitatory symptoms when injected intracranially into mice and is lethal at higher doses. Exposure to frog cutaneous pectoris induces spontaneous and repetitive action potentials. This effect is slowly reversible. Natural peptide (with D-Phe) is active on nerve, but not on muscle. Synthetic peptide (with L-Phe) is not active on both nerve and muscle. The polypeptide is Iota-conotoxin-like r11b (Conus radiatus (Rayed cone)).